A 327-amino-acid polypeptide reads, in one-letter code: Aldo-keto reductase family 1 member A1 (327 aa).

Residues 13–22 (GQKIPLIGLG), T23, W24, and D47 each bind NADP(+). The active-site Proton donor is the Y52. NADP(+) is bound by residues S164, N165, S213, L215, S217, K265, S266, V267, T268, R271, Q274, and N275.

This sequence belongs to the aldo/keto reductase family.

The protein localises to the cytoplasm. It localises to the cytosol. It is found in the apical cell membrane. It carries out the reaction a primary alcohol + NADP(+) = an aldehyde + NADPH + H(+). The catalysed reaction is S-nitroso-CoA + NADPH + H(+) = sulfinamide-CoA + NADP(+). The enzyme catalyses S-nitrosoglutathione + NADPH + H(+) = S-(hydroxysulfenamide)glutathione + NADP(+). Functionally, catalyzes the NADPH-dependent reduction of a wide variety of carbonyl-containing compounds to their corresponding alcohols. Displays enzymatic activity towards endogenous metabolites such as aromatic and aliphatic aldehydes, ketones, monosaccharides and bile acids. Acts as an aldehyde-detoxification enzyme. Also acts as an inhibitor of protein S-nitrosylation by mediating degradation of S-nitroso-coenzyme A (S-nitroso-CoA), a cofactor required to S-nitrosylate proteins. Also acts as a S-nitroso-glutathione reductase by catalyzing the NADPH-dependent reduction of S-nitrosoglutathione. Displays no reductase activity towards retinoids. The polypeptide is Aldo-keto reductase family 1 member A1 (AKR1A1) (Gallus gallus (Chicken)).